Reading from the N-terminus, the 504-residue chain is Histidine ammonia-lyase (504 aa).

Positions Ala-141–Gly-143 form a cross-link, 5-imidazolinone (Ala-Gly). A 2,3-didehydroalanine (Ser) modification is found at Ser-142.

Belongs to the PAL/histidase family. Contains an active site 4-methylidene-imidazol-5-one (MIO), which is formed autocatalytically by cyclization and dehydration of residues Ala-Ser-Gly.

It is found in the cytoplasm. The enzyme catalyses L-histidine = trans-urocanate + NH4(+). It functions in the pathway amino-acid degradation; L-histidine degradation into L-glutamate; N-formimidoyl-L-glutamate from L-histidine: step 1/3. The chain is Histidine ammonia-lyase from Geobacillus kaustophilus (strain HTA426).